Reading from the N-terminus, the 173-residue chain is Mesencephalic astrocyte-derived neurotrophic factor homolog (173 aa).

Residues 1–22 (MKTAHLVVVVCFLAGALQTAVA) form the signal peptide. 4 cysteine pairs are disulfide-bonded: C28–C114, C31–C103, C61–C72, and C148–C151.

This sequence belongs to the ARMET family.

The protein resides in the secreted. In terms of biological role, required during the maturation of the embryonic nervous system for maintenance of neuronal and cuticular connectivity. Essential for maintenance of dopaminergic neurons and dopamine levels. This is Mesencephalic astrocyte-derived neurotrophic factor homolog from Drosophila ananassae (Fruit fly).